Reading from the N-terminus, the 911-residue chain is DNA mismatch repair protein MutS (911 aa).

Positions 1 to 10 (MDNKTDHKND) are enriched in basic and acidic residues. The interval 1–24 (MDNKTDHKNDLNSQPVPSSAPHKE) is disordered. 662 to 669 (GPNMGGKS) contacts ATP.

Belongs to the DNA mismatch repair MutS family.

Functionally, this protein is involved in the repair of mismatches in DNA. It is possible that it carries out the mismatch recognition step. This protein has a weak ATPase activity. This is DNA mismatch repair protein MutS from Bartonella quintana (strain Toulouse) (Rochalimaea quintana).